Reading from the N-terminus, the 181-residue chain is Large ribosomal subunit protein uL6 (181 aa).

Belongs to the universal ribosomal protein uL6 family. Part of the 50S ribosomal subunit.

In terms of biological role, this protein binds to the 23S rRNA, and is important in its secondary structure. It is located near the subunit interface in the base of the L7/L12 stalk, and near the tRNA binding site of the peptidyltransferase center. The chain is Large ribosomal subunit protein uL6 from Ruthia magnifica subsp. Calyptogena magnifica.